A 431-amino-acid chain; its full sequence is Glutamate-1-semialdehyde 2,1-aminomutase (431 aa).

An N6-(pyridoxal phosphate)lysine modification is found at Lys-269.

It belongs to the class-III pyridoxal-phosphate-dependent aminotransferase family. HemL subfamily. In terms of assembly, homodimer. Requires pyridoxal 5'-phosphate as cofactor.

Its subcellular location is the cytoplasm. The catalysed reaction is (S)-4-amino-5-oxopentanoate = 5-aminolevulinate. Its pathway is porphyrin-containing compound metabolism; protoporphyrin-IX biosynthesis; 5-aminolevulinate from L-glutamyl-tRNA(Glu): step 2/2. The protein operates within porphyrin-containing compound metabolism; chlorophyll biosynthesis. The sequence is that of Glutamate-1-semialdehyde 2,1-aminomutase from Chlorobium limicola (strain DSM 245 / NBRC 103803 / 6330).